The sequence spans 162 residues: Probable chemoreceptor glutamine deamidase CheD 3 (162 aa).

The protein belongs to the CheD family.

The catalysed reaction is L-glutaminyl-[protein] + H2O = L-glutamyl-[protein] + NH4(+). Its function is as follows. Probably deamidates glutamine residues to glutamate on methyl-accepting chemotaxis receptors (MCPs), playing an important role in chemotaxis. This chain is Probable chemoreceptor glutamine deamidase CheD 3, found in Geobacter sulfurreducens (strain ATCC 51573 / DSM 12127 / PCA).